Consider the following 135-residue polypeptide: Small ribosomal subunit protein uS12 (135 aa).

A disordered region spans residues 1 to 29; it reads MPTINQLVRKGREKVEKKSKAPALQGNPQ. Aspartate 89 is subject to 3-methylthioaspartic acid. Residues 106-135 are disordered; the sequence is GVKDRKQSRSKYGAKRPKPGQAAATTGKKK. Over residues 113-123 the composition is skewed to basic residues; sequence SRSKYGAKRPK.

This sequence belongs to the universal ribosomal protein uS12 family. In terms of assembly, part of the 30S ribosomal subunit. Contacts proteins S8 and S17. May interact with IF1 in the 30S initiation complex.

In terms of biological role, with S4 and S5 plays an important role in translational accuracy. Interacts with and stabilizes bases of the 16S rRNA that are involved in tRNA selection in the A site and with the mRNA backbone. Located at the interface of the 30S and 50S subunits, it traverses the body of the 30S subunit contacting proteins on the other side and probably holding the rRNA structure together. The combined cluster of proteins S8, S12 and S17 appears to hold together the shoulder and platform of the 30S subunit. The polypeptide is Small ribosomal subunit protein uS12 (Sulfurihydrogenibium sp. (strain YO3AOP1)).